Consider the following 786-residue polypeptide: Ribosome biogenesis protein BOP1 homolog (786 aa).

The segment covering 1–11 has biased composition (basic residues); the sequence is MAKKSAIKRKV. Residues 1–161 are disordered; the sequence is MAKKSAIKRK…NSDTSDEEDI (161 aa). The segment covering 17-26 has biased composition (polar residues); sequence INEQASVSEQ. Composition is skewed to acidic residues over residues 44 to 53, 60 to 72, and 82 to 114; these read EDTTDDEGID, TSDD…DEEG, and SGED…DDAK. The span at 122-135 shows a compositional bias: polar residues; sequence KATLSKTTGDSSNI. Residues 141-150 show a composition bias toward basic and acidic residues; the sequence is PRRDPSKPEY. Positions 151–160 are enriched in acidic residues; that stretch reads ENSDTSDEED. 7 WD repeats span residues 447–488, 490–528, 572–614, 617–655, 658–697, 701–740, and 756–786; these read GHTD…RTIE, NDVV…KLLV, THFK…SQIP, KSKG…LIKK, TNSK…KPYQ, LHRN…DLLQ, and RDEF…RLYT.

The protein belongs to the WD repeat BOP1/ERB1 family.

It is found in the nucleus. Its subcellular location is the nucleolus. The protein resides in the nucleoplasm. Functionally, required for maturation of ribosomal RNAs and formation of the large ribosomal subunit. The sequence is that of Ribosome biogenesis protein BOP1 homolog from Drosophila grimshawi (Hawaiian fruit fly).